Consider the following 355-residue polypeptide: Methylthioribose-1-phosphate isomerase (355 aa).

Substrate contacts are provided by residues 50 to 52 (RGA), R93, and Q198. Residue D239 is the Proton donor of the active site. Position 249-250 (249-250 (NK)) interacts with substrate.

This sequence belongs to the eIF-2B alpha/beta/delta subunits family. MtnA subfamily. Homodimer.

The enzyme catalyses 5-(methylsulfanyl)-alpha-D-ribose 1-phosphate = 5-(methylsulfanyl)-D-ribulose 1-phosphate. It functions in the pathway amino-acid biosynthesis; L-methionine biosynthesis via salvage pathway; L-methionine from S-methyl-5-thio-alpha-D-ribose 1-phosphate: step 1/6. Catalyzes the interconversion of methylthioribose-1-phosphate (MTR-1-P) into methylthioribulose-1-phosphate (MTRu-1-P). The chain is Methylthioribose-1-phosphate isomerase from Geobacillus thermodenitrificans (strain NG80-2).